The sequence spans 344 residues: DNA-directed RNA polymerase subunit alpha (344 aa).

Residues methionine 1–glutamate 246 are alpha N-terminal domain (alpha-NTD). Residues glutamate 259–glutamate 344 are alpha C-terminal domain (alpha-CTD).

It belongs to the RNA polymerase alpha chain family. In terms of assembly, homodimer. The RNAP catalytic core consists of 2 alpha, 1 beta, 1 beta' and 1 omega subunit. When a sigma factor is associated with the core the holoenzyme is formed, which can initiate transcription.

It catalyses the reaction RNA(n) + a ribonucleoside 5'-triphosphate = RNA(n+1) + diphosphate. Its function is as follows. DNA-dependent RNA polymerase catalyzes the transcription of DNA into RNA using the four ribonucleoside triphosphates as substrates. The chain is DNA-directed RNA polymerase subunit alpha from Borreliella afzelii (strain PKo) (Borrelia afzelii).